The sequence spans 305 residues: 4-diphosphocytidyl-2-C-methyl-D-erythritol kinase (305 aa).

Lys10 is a catalytic residue. 95 to 105 (PVTAGLGGGSS) contacts ATP. Asp136 is a catalytic residue. The tract at residues 286-305 (PGVTPWRSPRSASSPSTKRS) is disordered. Positions 290–305 (PWRSPRSASSPSTKRS) are enriched in low complexity.

Belongs to the GHMP kinase family. IspE subfamily.

It catalyses the reaction 4-CDP-2-C-methyl-D-erythritol + ATP = 4-CDP-2-C-methyl-D-erythritol 2-phosphate + ADP + H(+). It functions in the pathway isoprenoid biosynthesis; isopentenyl diphosphate biosynthesis via DXP pathway; isopentenyl diphosphate from 1-deoxy-D-xylulose 5-phosphate: step 3/6. Catalyzes the phosphorylation of the position 2 hydroxy group of 4-diphosphocytidyl-2C-methyl-D-erythritol. This chain is 4-diphosphocytidyl-2-C-methyl-D-erythritol kinase, found in Anaeromyxobacter sp. (strain Fw109-5).